We begin with the raw amino-acid sequence, 218 residues long: 23 kDa integral membrane protein (218 aa).

The Cytoplasmic portion of the chain corresponds to 1–12; it reads MATLGTGMRCLK. The helical transmembrane segment at 13 to 36 threads the bilayer; that stretch reads SCVFILNIICLLCSLVLIGAGAYV. Topologically, residues 37-55 are extracellular; it reads EVKFSQYEANLHKVWQAAP. The chain crosses the membrane as a helical span at residues 56–71; it reads IAIIVVGVVILIVSFL. At 72–82 the chain is on the cytoplasmic side; the sequence is GCCGAIKENVC. The chain crosses the membrane as a helical span at residues 83-108; that stretch reads MLYMYAFFLIVLLIAELVAAIVAVVY. Over 109–183 the chain is Extracellular; it reads KDKIDDEINT…SVFSAFLKRN (75 aa). Residues 184 to 205 form a helical membrane-spanning segment; it reads LIIVACVAFGVCFFQLLSIVIA. Residues 206–218 are Cytoplasmic-facing; it reads CCLGQRIHDYQNV.

It belongs to the tetraspanin (TM4SF) family.

It localises to the membrane. This Schistosoma japonicum (Blood fluke) protein is 23 kDa integral membrane protein.